The primary structure comprises 243 residues: UPF0246 protein SUB1767 (243 aa).

This sequence belongs to the UPF0246 family.

This is UPF0246 protein SUB1767 from Streptococcus uberis (strain ATCC BAA-854 / 0140J).